Here is a 502-residue protein sequence, read N- to C-terminus: ATP synthase subunit alpha (502 aa).

169–176 (GDRQTGKT) provides a ligand contact to ATP.

This sequence belongs to the ATPase alpha/beta chains family. In terms of assembly, F-type ATPases have 2 components, CF(1) - the catalytic core - and CF(0) - the membrane proton channel. CF(1) has five subunits: alpha(3), beta(3), gamma(1), delta(1), epsilon(1). CF(0) has three main subunits: a(1), b(2) and c(9-12). The alpha and beta chains form an alternating ring which encloses part of the gamma chain. CF(1) is attached to CF(0) by a central stalk formed by the gamma and epsilon chains, while a peripheral stalk is formed by the delta and b chains.

It is found in the cell membrane. It carries out the reaction ATP + H2O + 4 H(+)(in) = ADP + phosphate + 5 H(+)(out). Its function is as follows. Produces ATP from ADP in the presence of a proton gradient across the membrane. The alpha chain is a regulatory subunit. In Staphylococcus aureus (strain bovine RF122 / ET3-1), this protein is ATP synthase subunit alpha.